A 765-amino-acid polypeptide reads, in one-letter code: 1,4-alpha-glucan branching enzyme GlgB (765 aa).

Catalysis depends on aspartate 431, which acts as the Nucleophile. The active-site Proton donor is the glutamate 484.

Belongs to the glycosyl hydrolase 13 family. GlgB subfamily. In terms of assembly, monomer.

It carries out the reaction Transfers a segment of a (1-&gt;4)-alpha-D-glucan chain to a primary hydroxy group in a similar glucan chain.. The protein operates within glycan biosynthesis; glycogen biosynthesis. Catalyzes the formation of the alpha-1,6-glucosidic linkages in glycogen by scission of a 1,4-alpha-linked oligosaccharide from growing alpha-1,4-glucan chains and the subsequent attachment of the oligosaccharide to the alpha-1,6 position. This chain is 1,4-alpha-glucan branching enzyme GlgB, found in Synechococcus sp. (strain CC9311).